A 251-amino-acid chain; its full sequence is GTP cyclohydrolase 1 type 2 homolog (251 aa).

A divalent metal cation-binding residues include His-63, His-64, Asp-101, His-219, and Glu-223.

Belongs to the GTP cyclohydrolase I type 2/NIF3 family. In terms of assembly, toroid-shaped homohexamer. In the hexamer, 3 dimers assemble to form a ring-like structure surrounding a central hole.

This is GTP cyclohydrolase 1 type 2 homolog from Haemophilus influenzae (strain ATCC 51907 / DSM 11121 / KW20 / Rd).